Consider the following 268-residue polypeptide: 4-hydroxy-tetrahydrodipicolinate reductase (268 aa).

8–13 contributes to the NAD(+) binding site; it reads GAAGRM. Arg-36 provides a ligand contact to NADP(+). NAD(+) is bound by residues 99-101 and 123-126; these read GTT and AANF. His-156 functions as the Proton donor/acceptor in the catalytic mechanism. His-157 contributes to the (S)-2,3,4,5-tetrahydrodipicolinate binding site. The active-site Proton donor is the Lys-160. 166–167 is a binding site for (S)-2,3,4,5-tetrahydrodipicolinate; the sequence is GT.

The protein belongs to the DapB family.

It is found in the cytoplasm. The enzyme catalyses (S)-2,3,4,5-tetrahydrodipicolinate + NAD(+) + H2O = (2S,4S)-4-hydroxy-2,3,4,5-tetrahydrodipicolinate + NADH + H(+). The catalysed reaction is (S)-2,3,4,5-tetrahydrodipicolinate + NADP(+) + H2O = (2S,4S)-4-hydroxy-2,3,4,5-tetrahydrodipicolinate + NADPH + H(+). Its pathway is amino-acid biosynthesis; L-lysine biosynthesis via DAP pathway; (S)-tetrahydrodipicolinate from L-aspartate: step 4/4. Catalyzes the conversion of 4-hydroxy-tetrahydrodipicolinate (HTPA) to tetrahydrodipicolinate. The chain is 4-hydroxy-tetrahydrodipicolinate reductase from Pseudomonas fluorescens (strain SBW25).